The sequence spans 504 residues: Subtilisin-like protease 1 (504 aa).

The signal sequence occupies residues 1 to 19 (MGVFRFISISLAAVSAANA). Residues 20 to 116 (AQILSMPHAQ…VEPDTIVSVH (97 aa)) constitute a propeptide that is removed on maturation. The region spanning 34–116 (SYIVMMKDDT…VEPDTIVSVH (83 aa)) is the Inhibitor I9 domain. A Peptidase S8 domain is found at 126–400 (SWGLARISNP…NVLINNGGAK (275 aa)). Catalysis depends on charge relay system residues Asp-158 and His-190. Positions 172-198 (AIWGSNQVNDGDDRDGSGHGTHTSGTM) are disordered. Asn-233 and Asn-251 each carry an N-linked (GlcNAc...) asparagine glycan. A compositionally biased stretch (polar residues) spans 282–294 (NDNQDAQSSSPAS). Residues 282–312 (NDNQDAQSSSPASEPSVCTVGSSAEDDSRSS) form a disordered region. Catalysis depends on Ser-345, which acts as the Charge relay system. Residues 378–394 (TSSITDAGPGTPTNVLI) are compositionally biased toward polar residues. The interval 378–483 (TSSITDAGPG…YPGGDNFDFD (106 aa)) is disordered. Composition is skewed to pro residues over residues 405 to 449 (NPNP…PGQP) and 457 to 473 (APAP…PHTP).

This sequence belongs to the peptidase S8 family.

It is found in the secreted. Its function is as follows. Secreted subtilisin-like serine protease with keratinolytic activity that contributes to pathogenicity. The chain is Subtilisin-like protease 1 (SUB1) from Trichophyton rubrum (Athlete's foot fungus).